We begin with the raw amino-acid sequence, 74 residues long: ATP synthase subunit c (74 aa).

2 consecutive transmembrane segments (helical) span residues 8 to 28 (FIGV…VSNI) and 52 to 72 (IGAG…MLLI).

This sequence belongs to the ATPase C chain family. In terms of assembly, F-type ATPases have 2 components, F(1) - the catalytic core - and F(0) - the membrane proton channel. F(1) has five subunits: alpha(3), beta(3), gamma(1), delta(1), epsilon(1). F(0) has three main subunits: a(1), b(2) and c(10-14). The alpha and beta chains form an alternating ring which encloses part of the gamma chain. F(1) is attached to F(0) by a central stalk formed by the gamma and epsilon chains, while a peripheral stalk is formed by the delta and b chains.

It is found in the cell inner membrane. In terms of biological role, f(1)F(0) ATP synthase produces ATP from ADP in the presence of a proton or sodium gradient. F-type ATPases consist of two structural domains, F(1) containing the extramembraneous catalytic core and F(0) containing the membrane proton channel, linked together by a central stalk and a peripheral stalk. During catalysis, ATP synthesis in the catalytic domain of F(1) is coupled via a rotary mechanism of the central stalk subunits to proton translocation. Key component of the F(0) channel; it plays a direct role in translocation across the membrane. A homomeric c-ring of between 10-14 subunits forms the central stalk rotor element with the F(1) delta and epsilon subunits. In Rickettsia canadensis (strain McKiel), this protein is ATP synthase subunit c.